A 331-amino-acid polypeptide reads, in one-letter code: Phenylalanine--tRNA ligase alpha subunit (331 aa).

Mg(2+) is bound at residue Glu252.

This sequence belongs to the class-II aminoacyl-tRNA synthetase family. Phe-tRNA synthetase alpha subunit type 1 subfamily. In terms of assembly, tetramer of two alpha and two beta subunits. The cofactor is Mg(2+).

The protein resides in the cytoplasm. It carries out the reaction tRNA(Phe) + L-phenylalanine + ATP = L-phenylalanyl-tRNA(Phe) + AMP + diphosphate + H(+). The chain is Phenylalanine--tRNA ligase alpha subunit from Stenotrophomonas maltophilia (strain R551-3).